An 89-amino-acid chain; its full sequence is Small ribosomal subunit protein uS15 (89 aa).

It belongs to the universal ribosomal protein uS15 family. As to quaternary structure, part of the 30S ribosomal subunit. Forms a bridge to the 50S subunit in the 70S ribosome, contacting the 23S rRNA.

Its function is as follows. One of the primary rRNA binding proteins, it binds directly to 16S rRNA where it helps nucleate assembly of the platform of the 30S subunit by binding and bridging several RNA helices of the 16S rRNA. Forms an intersubunit bridge (bridge B4) with the 23S rRNA of the 50S subunit in the ribosome. The chain is Small ribosomal subunit protein uS15 from Paramagnetospirillum magneticum (strain ATCC 700264 / AMB-1) (Magnetospirillum magneticum).